The sequence spans 521 residues: GMP synthase [glutamine-hydrolyzing] (521 aa).

A Glutamine amidotransferase type-1 domain is found at 8-203 (KILILDFGAQ…VVDVCGCQTL (196 aa)). C85 serves as the catalytic Nucleophile. Residues H177 and E179 contribute to the active site. The GMPS ATP-PPase domain occupies 204–396 (WTAANIIDDQ…LGLPRTMVYR (193 aa)). 231-237 (SGGVDSS) is an ATP binding site.

As to quaternary structure, homodimer.

The catalysed reaction is XMP + L-glutamine + ATP + H2O = GMP + L-glutamate + AMP + diphosphate + 2 H(+). It functions in the pathway purine metabolism; GMP biosynthesis; GMP from XMP (L-Gln route): step 1/1. Functionally, catalyzes the synthesis of GMP from XMP. The polypeptide is GMP synthase [glutamine-hydrolyzing] (Stenotrophomonas maltophilia (strain R551-3)).